The chain runs to 37 residues: Potassium channel toxin alpha-KTx 11.2 (37 aa).

3 disulfide bridges follow: Cys-8–Cys-27, Cys-13–Cys-33, and Cys-17–Cys-35.

This sequence belongs to the short scorpion toxin superfamily. Potassium channel inhibitor family. Alpha-KTx 11 subfamily. Expressed by the venom gland.

It localises to the secreted. Functionally, binds and inhibits voltage-sensitive potassium channels. Inhibits the vertebrate potassium channel Kv1.1/KCNA1 with low affinity. This is Potassium channel toxin alpha-KTx 11.2 from Parabuthus villosus (Black hairy thick-tailed scorpion).